Consider the following 435-residue polypeptide: E3 ubiquitin-protein ligase PUB22 (435 aa).

A U-box domain is found at 6-81; it reads EIPSFFLCPI…QSWCTLNASY (76 aa).

As to quaternary structure, interacts with RPN12A. Binds to EXO70B2. Post-translationally, auto-ubiquitinated leading to degradation via the 26S proteasome. This Auto-ubiquitination is repressed by the bacterial elicitor flg22 thus leading to a transiently increased protein stabilization and accumulation.

It localises to the cytoplasm. The catalysed reaction is S-ubiquitinyl-[E2 ubiquitin-conjugating enzyme]-L-cysteine + [acceptor protein]-L-lysine = [E2 ubiquitin-conjugating enzyme]-L-cysteine + N(6)-ubiquitinyl-[acceptor protein]-L-lysine.. Its pathway is protein modification; protein ubiquitination. Functionally, E3 ubiquitin-protein ligase that negatively regulates water stress response. May control in coordination with PUB23 a drought signaling pathway by ubiquitinating cytosolic RPN12a. Acts as a negative regulator of the immunity triggered by the pathogen-associated molecular patterns (PAMPs), in association with PUB23 and PUB24. Regulates EXO70B2 ubiquitination and degradation via the 26S proteasome to attenuate PAMP-induced signaling. This is E3 ubiquitin-protein ligase PUB22 from Arabidopsis thaliana (Mouse-ear cress).